Consider the following 262-residue polypeptide: MRVTPRTLQNYKKTARPIVTLTAWDYAIARLVDQAGVDVILVGDSLAMVALGYENTLPVTLEAMIHHTQAVCRGVKNALVVSDLPFLTYQESLSQAIHTAGRILKETTAQAIKLEGGHPAMAETVERLTRLGVPVMGHVGLTPQSVHTLGYRQQGNTELEATRVIQEAIALEQAGAFAVVLEHIPATLAQTITEKLTIPTIGIGAGRHCDGQVLVTADLLGLSEKAPPFAKQYLDLDNLITNAVQRYSDDVRTQQFPPHLGS.

Aspartate 44 and aspartate 83 together coordinate Mg(2+). 3-methyl-2-oxobutanoate is bound by residues 44-45 (DS), aspartate 83, and lysine 113. Glutamate 115 lines the Mg(2+) pocket. Catalysis depends on glutamate 182, which acts as the Proton acceptor.

This sequence belongs to the PanB family. In terms of assembly, homodecamer; pentamer of dimers. Requires Mg(2+) as cofactor.

It localises to the cytoplasm. It catalyses the reaction 3-methyl-2-oxobutanoate + (6R)-5,10-methylene-5,6,7,8-tetrahydrofolate + H2O = 2-dehydropantoate + (6S)-5,6,7,8-tetrahydrofolate. The protein operates within cofactor biosynthesis; (R)-pantothenate biosynthesis; (R)-pantoate from 3-methyl-2-oxobutanoate: step 1/2. Catalyzes the reversible reaction in which hydroxymethyl group from 5,10-methylenetetrahydrofolate is transferred onto alpha-ketoisovalerate to form ketopantoate. The polypeptide is 3-methyl-2-oxobutanoate hydroxymethyltransferase (Picosynechococcus sp. (strain ATCC 27264 / PCC 7002 / PR-6) (Agmenellum quadruplicatum)).